The sequence spans 274 residues: Protein FRG1 homolog (274 aa).

The Nuclear localization signal signature appears at 20 to 36 (KKNLFKVGKEKKKKNKD). Residues 27–46 (GKEKKKKNKDDKEKIDPDTV) are disordered. Basic and acidic residues predominate over residues 34–43 (NKDDKEKIDP). Positions 252 to 268 (QADGSAHELLLDRRMKM) match the Bipartite nuclear localization signal motif.

This sequence belongs to the FRG1 family.

The protein localises to the nucleus. Its subcellular location is the cajal body. It is found in the nucleolus. The protein resides in the cytoplasm. Functionally, binds to mRNA in a sequence-independent manner. May play a role in regulation of pre-mRNA splicing or in the assembly of rRNA into ribosomal subunits. May be involved in mRNA transport. May be involved in epigenetic regulation of muscle differentiation through regulation of activity of the histone-lysine N-methyltransferase KMT5B. This chain is Protein FRG1 homolog (frg-1), found in Caenorhabditis elegans.